Consider the following 172-residue polypeptide: MAEKRNIFLIGPMGAGKSTIGRHLAEQLHMEFFDSDHEIERRSGADIGWVFDVEGEEGFRIREEKVIGDLSEQQGIVLATGGGAIKSRETRNKLSARGIVVYLETTIEKQLARTQRDKRRPLLQTEEPPREVLERLAQERNALYEEVADFVIQTDDQSAKIVANQIVKLIGM.

14–19 lines the ATP pocket; sequence GAGKST. S18 contacts Mg(2+). 3 residues coordinate substrate: D36, R60, and G82. Residue R120 coordinates ATP. R140 is a substrate binding site. Residue Q157 participates in ATP binding.

This sequence belongs to the shikimate kinase family. As to quaternary structure, monomer. The cofactor is Mg(2+).

Its subcellular location is the cytoplasm. It catalyses the reaction shikimate + ATP = 3-phosphoshikimate + ADP + H(+). The protein operates within metabolic intermediate biosynthesis; chorismate biosynthesis; chorismate from D-erythrose 4-phosphate and phosphoenolpyruvate: step 5/7. Its function is as follows. Catalyzes the specific phosphorylation of the 3-hydroxyl group of shikimic acid using ATP as a cosubstrate. This chain is Shikimate kinase, found in Aeromonas salmonicida (strain A449).